The following is a 124-amino-acid chain: Probable cytochrome b5 1 (124 aa).

A Cytochrome b5 heme-binding domain is found at 3 to 79 (VKYFEPEEIV…LEEMYIGDLK (77 aa)). The heme site is built by His-38 and His-62. Residues 100–120 (PPLPLLIALIVLPAIAVIVFV) form a helical membrane-spanning segment.

The protein belongs to the cytochrome b5 family.

The protein resides in the endoplasmic reticulum membrane. It localises to the microsome membrane. Its function is as follows. Membrane bound hemoprotein which function as an electron carrier for several membrane bound oxygenases. The sequence is that of Probable cytochrome b5 1 from Schizosaccharomyces pombe (strain 972 / ATCC 24843) (Fission yeast).